Reading from the N-terminus, the 72-residue chain is Translation initiation factor IF-1 (72 aa).

An S1-like domain is found at 1 to 72 (MAKDNVIEIE…SKGRITYRFK (72 aa)).

This sequence belongs to the IF-1 family. In terms of assembly, component of the 30S ribosomal translation pre-initiation complex which assembles on the 30S ribosome in the order IF-2 and IF-3, IF-1 and N-formylmethionyl-tRNA(fMet); mRNA recruitment can occur at any time during PIC assembly.

It localises to the cytoplasm. One of the essential components for the initiation of protein synthesis. Stabilizes the binding of IF-2 and IF-3 on the 30S subunit to which N-formylmethionyl-tRNA(fMet) subsequently binds. Helps modulate mRNA selection, yielding the 30S pre-initiation complex (PIC). Upon addition of the 50S ribosomal subunit IF-1, IF-2 and IF-3 are released leaving the mature 70S translation initiation complex. The chain is Translation initiation factor IF-1 from Pediococcus pentosaceus (strain ATCC 25745 / CCUG 21536 / LMG 10740 / 183-1w).